Reading from the N-terminus, the 1124-residue chain is MFTLDGDSSDYFDDDLGDLGVDRPSDATDPDTPPPAKRRRLRAGKDASNADLQSHQKPRAERGDGARTALSSDSFIDYDDDEVPSPERESPYFQDDSEREARSKYKVFAPKNANIQENIFVTQLTQPPSPPEMLRGPRWKKPDPGLPTRTVATPLPETTQSRESAAGDRDDEYDDDEEMKAAIEASLQSFEEETSRPAPSVPLQKPPSSTPIIGQQSTTIEASNDLLDDIPDDAFDSDLSMSPPPAPQPRPAARSFTQSTNRPLGVRQTTLFGMVARNPENQPPRGEQVYSPPEKSEPPTQHKLNQEALGTWVYPTNLGKTRDYQFNIAQKGLFHNLLVALPTGLGKTFIAATIMLNWFRWTKDAQIVFVAPTKPLVAQQISACFEVAGIPRSQTTMLTGEAAPGIRAEEWKAKRVFFMTPQTLINDLKTGIADPKRIVLVVVDEAHRATGGYAYVEVVKFLRRYNQSFRVLALTATPGSTVESVQAVIDGLDISRVEIRTEQSLDIREYVHSKDTDVQTFQNSEEMVLCMDLMSKALQPLLDQLRSTNAYWGRDPMGLTAYGLTKARQQWMLSDSGRNAHFGVKAKMNAIFTVLASLAHGIDLLKYHGITPFYRHLLHFQSNTEGQKGGKYQRQVVQDESYKKLMNHLQPWTKNPEFIGHPKLEYLKQVVLNHFMDAGEGSGADENKDQPATRVMIFVHFRDSAEEVTRVLKRYEPMIRPHVFVGQSSAKGSEGMGQKTQLDIVQKFKKGTYNTIVATSIGEEGLDIGEVDLIVCYDSSASPIRMLQRMGRTGRKRSGKITLLLMQGKEEESYIKAKDNYEKMQQMIASGTRFTFHDDMSPRILPPGVRPVADKRAIDIPEENTVRDLPEPKRRGRAPKRPPKKFHMPDNVETGFTTASHLAGTSKRRVPNKSKARTPTPEPVELPALEDVLLTPAQQKELELHYSNAGPSEELLVSYPRSDAFPRLQLAPRPTKAVRHGSLTRRMIETLQKMDQITPDCGDRYKGILAREKASMPKASIVAPKPNGRGEAQSRTKARHTSKVVSSKSRNQEEQDVTEVQRTPPGKHSVSATNAEVEPFYCSQRTQDGDTDDDFDLPDVSTLLNRSVERPSTRGRFVLDDSDD.

Disordered stretches follow at residues 1–103 (MFTL…EARS) and 123–302 (QLTQ…PTQH). Acidic residues-rich tracts occupy residues 7 to 17 (DSSDYFDDDLG) and 169 to 178 (RDDEYDDDEE). Residues 210–222 (TPIIGQQSTTIEA) show a composition bias toward polar residues. Residues 226 to 236 (LLDDIPDDAFD) are compositionally biased toward acidic residues. The span at 255-271 (SFTQSTNRPLGVRQTTL) shows a compositional bias: polar residues. One can recognise a Helicase ATP-binding domain in the interval 328–496 (IAQKGLFHNL…AVIDGLDISR (169 aa)). 341–348 (LPTGLGKT) lines the ATP pocket. Residues 444 to 447 (DEAH) carry the DEAH box motif. Positions 666-840 (YLKQVVLNHF…GTRFTFHDDM (175 aa)) constitute a Helicase C-terminal domain. Over residues 855–873 (KRAIDIPEENTVRDLPEPK) the composition is skewed to basic and acidic residues. Disordered regions lie at residues 855–923 (KRAI…TPEP) and 1016–1124 (MPKA…DSDD). 2 stretches are compositionally biased toward basic residues: residues 874–886 (RRGR…PKKF) and 906–916 (SKRRVPNKSKA).

It belongs to the DEAD box helicase family. DEAH subfamily. FANCM sub-subfamily. As to quaternary structure, interacts with the MHF histone-fold complex to form the FANCM-MHF complex.

Its subcellular location is the nucleus. The catalysed reaction is ATP + H2O = ADP + phosphate + H(+). ATP-dependent DNA helicase involved in DNA damage repair by homologous recombination and in genome maintenance. Capable of unwinding D-loops. Plays a role in limiting crossover recombinants during mitotic DNA double-strand break (DSB) repair. Component of a FANCM-MHF complex which promotes gene conversion at blocked replication forks, probably by reversal of the stalled fork. The protein is ATP-dependent DNA helicase mph1 of Aspergillus niger (strain ATCC MYA-4892 / CBS 513.88 / FGSC A1513).